A 393-amino-acid chain; its full sequence is Glutamate 5-kinase 1 (393 aa).

ATP is bound at residue Lys-17. Residues Ser-57, Asp-144, and Asn-156 each coordinate substrate. 176–177 (SD) provides a ligand contact to ATP. Residues 282 to 359 (AGSLSIDAGA…AEIAAILGYA (78 aa)) form the PUA domain.

It belongs to the glutamate 5-kinase family.

The protein localises to the cytoplasm. The catalysed reaction is L-glutamate + ATP = L-glutamyl 5-phosphate + ADP. The protein operates within amino-acid biosynthesis; L-proline biosynthesis; L-glutamate 5-semialdehyde from L-glutamate: step 1/2. In terms of biological role, catalyzes the transfer of a phosphate group to glutamate to form L-glutamate 5-phosphate. The sequence is that of Glutamate 5-kinase 1 from Rhizobium meliloti (strain 1021) (Ensifer meliloti).